The following is a 473-amino-acid chain: 23S rRNA (uracil(1939)-C(5))-methyltransferase RlmD (473 aa).

A disordered region spans residues 6 to 27 (KPSKGKNKSNVKGRVRGAGSGE). Positions 8–20 (SKGKNKSNVKGRV) are enriched in basic residues. In terms of domain architecture, TRAM spans 42-99 (DDINAANEAVTIDGMDWQGQGVARGDTLYFVDGALPGETVEIKALSSNKQIVNAKVTK). [4Fe-4S] cluster-binding residues include Cys112, Cys118, Cys121, and Cys199. Gln304, Phe333, Asn338, Glu354, Asp381, and Asp402 together coordinate S-adenosyl-L-methionine. The active-site Nucleophile is Cys428.

Belongs to the class I-like SAM-binding methyltransferase superfamily. RNA M5U methyltransferase family. RlmD subfamily.

The enzyme catalyses uridine(1939) in 23S rRNA + S-adenosyl-L-methionine = 5-methyluridine(1939) in 23S rRNA + S-adenosyl-L-homocysteine + H(+). Catalyzes the formation of 5-methyl-uridine at position 1939 (m5U1939) in 23S rRNA. The chain is 23S rRNA (uracil(1939)-C(5))-methyltransferase RlmD from Alteromonas naphthalenivorans.